We begin with the raw amino-acid sequence, 729 residues long: Elongation factor 2 (729 aa).

The tr-type G domain maps to 19–262; the sequence is EQIRNIAIAA…MVCEHFPNPI (244 aa). GTP-binding positions include 28-35, 94-98, and 148-151; these read AHVDHGKT, DTPGH, and NKVD. Position 597 is a diphthamide (histidine 597).

The protein belongs to the TRAFAC class translation factor GTPase superfamily. Classic translation factor GTPase family. EF-G/EF-2 subfamily.

It localises to the cytoplasm. Catalyzes the GTP-dependent ribosomal translocation step during translation elongation. During this step, the ribosome changes from the pre-translocational (PRE) to the post-translocational (POST) state as the newly formed A-site-bound peptidyl-tRNA and P-site-bound deacylated tRNA move to the P and E sites, respectively. Catalyzes the coordinated movement of the two tRNA molecules, the mRNA and conformational changes in the ribosome. In Halomicrobium mukohataei (strain ATCC 700874 / DSM 12286 / JCM 9738 / NCIMB 13541) (Haloarcula mukohataei), this protein is Elongation factor 2.